We begin with the raw amino-acid sequence, 255 residues long: Thiazole synthase (255 aa).

The Schiff-base intermediate with DXP role is filled by K96. 1-deoxy-D-xylulose 5-phosphate is bound by residues G157, 183-184 (AG), and 205-206 (NS).

Belongs to the ThiG family. As to quaternary structure, homotetramer. Forms heterodimers with either ThiH or ThiS.

It localises to the cytoplasm. It carries out the reaction [ThiS sulfur-carrier protein]-C-terminal-Gly-aminoethanethioate + 2-iminoacetate + 1-deoxy-D-xylulose 5-phosphate = [ThiS sulfur-carrier protein]-C-terminal Gly-Gly + 2-[(2R,5Z)-2-carboxy-4-methylthiazol-5(2H)-ylidene]ethyl phosphate + 2 H2O + H(+). The protein operates within cofactor biosynthesis; thiamine diphosphate biosynthesis. Its function is as follows. Catalyzes the rearrangement of 1-deoxy-D-xylulose 5-phosphate (DXP) to produce the thiazole phosphate moiety of thiamine. Sulfur is provided by the thiocarboxylate moiety of the carrier protein ThiS. In vitro, sulfur can be provided by H(2)S. The chain is Thiazole synthase from Staphylococcus carnosus (strain TM300).